A 69-amino-acid chain; its full sequence is Cytochrome c oxidase subunit 8A, mitochondrial (69 aa).

A mitochondrion-targeting transit peptide spans 1-25 (MSVLTPLLLRGLTGSARRLPVLRAQ). The SIFI-degron signature appears at 2–19 (SVLTPLLLRGLTGSARRL). The Mitochondrial matrix segment spans residues 26–36 (VHSKPPREKLG). A helical transmembrane segment spans residues 37 to 60 (TMDVAIGLTSCFVCFLLPSGWVLS). Residues 61–69 (HLETYKKRE) lie on the Mitochondrial intermembrane side of the membrane.

This sequence belongs to the cytochrome c oxidase VIII family. In terms of assembly, component of the cytochrome c oxidase (complex IV, CIV), a multisubunit enzyme composed of 14 subunits. The complex is composed of a catalytic core of 3 subunits MT-CO1, MT-CO2 and MT-CO3, encoded in the mitochondrial DNA, and 11 supernumerary subunits COX4I, COX5A, COX5B, COX6A, COX6B, COX6C, COX7A, COX7B, COX7C, COX8 and NDUFA4, which are encoded in the nuclear genome. The complex exists as a monomer or a dimer and forms supercomplexes (SCs) in the inner mitochondrial membrane with NADH-ubiquinone oxidoreductase (complex I, CI) and ubiquinol-cytochrome c oxidoreductase (cytochrome b-c1 complex, complex III, CIII), resulting in different assemblies (supercomplex SCI(1)III(2)IV(1) and megacomplex MCI(2)III(2)IV(2)). In terms of processing, in response to mitochondrial stress, the precursor protein is ubiquitinated by the SIFI complex in the cytoplasm before mitochondrial import, leading to its degradation. Within the SIFI complex, UBR4 initiates ubiquitin chain that are further elongated or branched by KCMF1.

It localises to the mitochondrion inner membrane. The protein operates within energy metabolism; oxidative phosphorylation. Component of the cytochrome c oxidase, the last enzyme in the mitochondrial electron transport chain which drives oxidative phosphorylation. The respiratory chain contains 3 multisubunit complexes succinate dehydrogenase (complex II, CII), ubiquinol-cytochrome c oxidoreductase (cytochrome b-c1 complex, complex III, CIII) and cytochrome c oxidase (complex IV, CIV), that cooperate to transfer electrons derived from NADH and succinate to molecular oxygen, creating an electrochemical gradient over the inner membrane that drives transmembrane transport and the ATP synthase. Cytochrome c oxidase is the component of the respiratory chain that catalyzes the reduction of oxygen to water. Electrons originating from reduced cytochrome c in the intermembrane space (IMS) are transferred via the dinuclear copper A center (CU(A)) of subunit 2 and heme A of subunit 1 to the active site in subunit 1, a binuclear center (BNC) formed by heme A3 and copper B (CU(B)). The BNC reduces molecular oxygen to 2 water molecules using 4 electrons from cytochrome c in the IMS and 4 protons from the mitochondrial matrix. The polypeptide is Cytochrome c oxidase subunit 8A, mitochondrial (COX8A) (Eulemur fulvus fulvus (Brown lemur)).